The sequence spans 265 residues: uncharacterized protein (265 aa).

Glutamate 47 is an active-site residue.

The protein belongs to the PhzF family.

This is an uncharacterized protein from Halalkalibacterium halodurans (strain ATCC BAA-125 / DSM 18197 / FERM 7344 / JCM 9153 / C-125) (Bacillus halodurans).